We begin with the raw amino-acid sequence, 98 residues long: Large ribosomal subunit protein uL23 (98 aa).

The protein belongs to the universal ribosomal protein uL23 family. In terms of assembly, part of the 50S ribosomal subunit. Contacts protein L29, and trigger factor when it is bound to the ribosome.

Functionally, one of the early assembly proteins it binds 23S rRNA. One of the proteins that surrounds the polypeptide exit tunnel on the outside of the ribosome. Forms the main docking site for trigger factor binding to the ribosome. The protein is Large ribosomal subunit protein uL23 of Methylorubrum extorquens (strain CM4 / NCIMB 13688) (Methylobacterium extorquens).